Reading from the N-terminus, the 426-residue chain is Mannose-6-phosphate isomerase (426 aa).

Zn(2+) contacts are provided by Gln-112, His-114, Glu-139, and His-277. Residue Arg-296 is part of the active site.

The protein belongs to the mannose-6-phosphate isomerase type 1 family. Zn(2+) serves as cofactor.

Its subcellular location is the cytoplasm. It catalyses the reaction D-mannose 6-phosphate = D-fructose 6-phosphate. It functions in the pathway nucleotide-sugar biosynthesis; GDP-alpha-D-mannose biosynthesis; alpha-D-mannose 1-phosphate from D-fructose 6-phosphate: step 1/2. Involved in the synthesis of the GDP-mannose and dolichol-phosphate-mannose required for a number of critical mannosyl transfer reactions. The sequence is that of Mannose-6-phosphate isomerase (PMI40) from Ogataea parapolymorpha (strain ATCC 26012 / BCRC 20466 / JCM 22074 / NRRL Y-7560 / DL-1) (Yeast).